The chain runs to 304 residues: UDP-3-O-acyl-N-acetylglucosamine deacetylase (304 aa).

Zn(2+) contacts are provided by H77, H233, and D237. Catalysis depends on H260, which acts as the Proton donor.

It belongs to the LpxC family. The cofactor is Zn(2+).

The enzyme catalyses a UDP-3-O-[(3R)-3-hydroxyacyl]-N-acetyl-alpha-D-glucosamine + H2O = a UDP-3-O-[(3R)-3-hydroxyacyl]-alpha-D-glucosamine + acetate. It functions in the pathway glycolipid biosynthesis; lipid IV(A) biosynthesis; lipid IV(A) from (3R)-3-hydroxytetradecanoyl-[acyl-carrier-protein] and UDP-N-acetyl-alpha-D-glucosamine: step 2/6. Its function is as follows. Catalyzes the hydrolysis of UDP-3-O-myristoyl-N-acetylglucosamine to form UDP-3-O-myristoylglucosamine and acetate, the committed step in lipid A biosynthesis. The protein is UDP-3-O-acyl-N-acetylglucosamine deacetylase of Lawsonia intracellularis (strain PHE/MN1-00).